The chain runs to 316 residues: Phosphoribosylaminoimidazole-succinocarboxamide synthase (316 aa).

This sequence belongs to the SAICAR synthetase family.

It catalyses the reaction 5-amino-1-(5-phospho-D-ribosyl)imidazole-4-carboxylate + L-aspartate + ATP = (2S)-2-[5-amino-1-(5-phospho-beta-D-ribosyl)imidazole-4-carboxamido]succinate + ADP + phosphate + 2 H(+). Its pathway is purine metabolism; IMP biosynthesis via de novo pathway; 5-amino-1-(5-phospho-D-ribosyl)imidazole-4-carboxamide from 5-amino-1-(5-phospho-D-ribosyl)imidazole-4-carboxylate: step 1/2. This Flavobacterium psychrophilum (strain ATCC 49511 / DSM 21280 / CIP 103535 / JIP02/86) protein is Phosphoribosylaminoimidazole-succinocarboxamide synthase.